A 260-amino-acid polypeptide reads, in one-letter code: MHDWNPALYRRFEDERTRPAHELLARVPLSAASHVVDLGCGPGNSTELLAVRFPGARVTGIDTSAAMLQSARERLPAAEFVQADIAAWAPQPGEAPDLLYANASLQWVGGHESLIPRLFAALAPGGVLAIQMPDNRQEPSHRTMREVAAQAPWRDAIGDAAAVRTRILGIADYYDLLAPIARSVDVWHTVYQHPMASAAAIVEWVSGTGLKPFVDPLPEAQRAGFLAAYERGIDAAYPVRADGQRLLAFPRMFIVARRSA.

The protein belongs to the methyltransferase superfamily. Tam family.

It is found in the cytoplasm. It carries out the reaction trans-aconitate + S-adenosyl-L-methionine = (E)-3-(methoxycarbonyl)pent-2-enedioate + S-adenosyl-L-homocysteine. Functionally, catalyzes the S-adenosylmethionine monomethyl esterification of trans-aconitate. This chain is Trans-aconitate 2-methyltransferase, found in Paracidovorax citrulli (strain AAC00-1) (Acidovorax citrulli).